The primary structure comprises 852 residues: Mannosyl-oligosaccharide glucosidase GCS1 (852 aa).

Residues 1–31 (MTGASRRSARGRIKSSSLSPGSDEGSAYPPS) are disordered. At 1–51 (MTGASRRSARGRIKSSSLSPGSDEGSAYPPSIRRGKGKELVSIGAFKTNLK) the chain is on the cytoplasmic side. Residues 6 to 12 (RRSARGR) carry the Endoplasmic reticulum targeting motif. A compositionally biased stretch (low complexity) spans 15–26 (SSSLSPGSDEGS). Residues 52–72 (ILVGLIILGIIVIYFVINRLV) form a helical; Signal-anchor for type II membrane protein membrane-spanning segment. The Lumenal portion of the chain corresponds to 73 to 852 (RHGLLFDESQ…LIMSEDYPIF (780 aa)). A required for endoplasmic reticulum targeting region spans residues 91–150 (PAPKVMDLSMFQGEHKESLYWGTYRPHVYFGVRARTPLSLVAGLMWLGVKDEMYVMRHFC). N-linked (GlcNAc...) asparagine glycans are attached at residues N282, N552, and N570. Residues 574 to 583 (QELNPKTLSS) show a composition bias toward polar residues. The disordered stretch occupies residues 574-593 (QELNPKTLSSGLDDYPRASH). The active-site Proton donor is D586. Residues N633, N662, and N730 are each glycosylated (N-linked (GlcNAc...) asparagine). E819 serves as the catalytic Proton acceptor.

The protein belongs to the glycosyl hydrolase 63 family. In terms of tissue distribution, constitutively expressed in roots, stems, leaves, flowers and siliques.

Its subcellular location is the endoplasmic reticulum membrane. The catalysed reaction is N(4)-(alpha-D-Glc-(1-&gt;2)-alpha-D-Glc-(1-&gt;3)-alpha-D-Glc-(1-&gt;3)-alpha-D-Man-(1-&gt;2)-alpha-D-Man-(1-&gt;2)-alpha-D-Man-(1-&gt;3)-[alpha-D-Man-(1-&gt;2)-alpha-D-Man-(1-&gt;3)-[alpha-D-Man-(1-&gt;2)-alpha-D-Man-(1-&gt;6)]-alpha-D-Man-(1-&gt;6)]-beta-D-Man-(1-&gt;4)-beta-D-GlcNAc-(1-&gt;4)-beta-D-GlcNAc)-L-asparaginyl-[protein] + H2O = N(4)-(alpha-D-Glc-(1-&gt;3)-alpha-D-Glc-(1-&gt;3)-alpha-D-Man-(1-&gt;2)-alpha-D-Man-(1-&gt;2)-alpha-D-Man-(1-&gt;3)-[alpha-D-Man-(1-&gt;2)-alpha-D-Man-(1-&gt;3)-[alpha-D-Man-(1-&gt;2)-alpha-D-Man-(1-&gt;6)]-alpha-D-Man-(1-&gt;6)]-beta-D-Man-(1-&gt;4)-beta-D-GlcNAc-(1-&gt;4)-beta-D-GlcNAc)-L-asparaginyl-[protein] + beta-D-glucose. The protein operates within glycan metabolism; N-glycan degradation. In terms of biological role, cleaves the distal alpha 1,2-linked glucose residue from the Glc(3)Man(9)GlcNAc(2) oligosaccharide precursor. Required for the accumulation of seed storage proteins, the formation of protein bodies, cell differentiation, cellulose biosynthesis and organization (in cell walls), cell shape determination and organization (e.g. epidermal cells), and embryo development. Involved in root development. The chain is Mannosyl-oligosaccharide glucosidase GCS1 (GCS1) from Arabidopsis thaliana (Mouse-ear cress).